The following is a 123-amino-acid chain: Small ribosomal subunit protein uS12cz/uS12cy (123 aa).

Belongs to the universal ribosomal protein uS12 family. As to quaternary structure, part of the 30S ribosomal subunit.

The protein resides in the plastid. It localises to the chloroplast. Its function is as follows. With S4 and S5 plays an important role in translational accuracy. Located at the interface of the 30S and 50S subunits. This is Small ribosomal subunit protein uS12cz/uS12cy (rps12-A) from Phaseolus vulgaris (Kidney bean).